The following is a 185-amino-acid chain: Ribosome-recycling factor (185 aa).

This sequence belongs to the RRF family.

The protein localises to the cytoplasm. In terms of biological role, responsible for the release of ribosomes from messenger RNA at the termination of protein biosynthesis. May increase the efficiency of translation by recycling ribosomes from one round of translation to another. The chain is Ribosome-recycling factor from Nocardioides sp. (strain ATCC BAA-499 / JS614).